Here is a 142-residue protein sequence, read N- to C-terminus: Large ribosomal subunit protein uL13 (142 aa).

It belongs to the universal ribosomal protein uL13 family. In terms of assembly, part of the 50S ribosomal subunit.

In terms of biological role, this protein is one of the early assembly proteins of the 50S ribosomal subunit, although it is not seen to bind rRNA by itself. It is important during the early stages of 50S assembly. The protein is Large ribosomal subunit protein uL13 of Serratia proteamaculans (strain 568).